A 545-amino-acid polypeptide reads, in one-letter code: Pectinesterase/pectinesterase inhibitor (545 aa).

An N-terminal signal peptide occupies residues 1–37; it reads MEINQPNLLEASKSCYSKITFFLLVISFAALVSTGFS. Positions 38 to 191 are pectinesterase inhibitor; that stretch reads SPELSLHHKI…ILRARTSLAI (154 aa). The propeptide occupies 38-228; sequence SPELSLHHKI…RRLLQTLGKD (191 aa). Asn-135 is a glycosylation site (N-linked (GlcNAc...) asparagine). The tract at residues 232-530 is pectinesterase; it reads DIVVAKDGSG…TVAELIQGGS (299 aa). Substrate is bound by residues Thr-307 and Gln-337. A disulfide bond links Cys-326 and Cys-353. The active-site Proton donor; for pectinesterase activity is the Asp-360. Asn-375 carries an N-linked (GlcNAc...) (complex) asparagine glycan. Residue Asp-381 is the Nucleophile; for pectinesterase activity of the active site. A disulfide bridge connects residues Cys-394 and Cys-428. Residues Arg-449 and Trp-451 each contribute to the substrate site.

It in the N-terminal section; belongs to the PMEI family. This sequence in the C-terminal section; belongs to the pectinesterase family. N-glycosylated.

It localises to the secreted. The protein localises to the cell wall. The catalysed reaction is [(1-&gt;4)-alpha-D-galacturonosyl methyl ester](n) + n H2O = [(1-&gt;4)-alpha-D-galacturonosyl](n) + n methanol + n H(+). It participates in glycan metabolism; pectin degradation; 2-dehydro-3-deoxy-D-gluconate from pectin: step 1/5. In terms of biological role, acts in the modification of cell walls via demethylesterification of cell wall pectin. This Ficus pumila var. awkeotsang (Jelly fig) protein is Pectinesterase/pectinesterase inhibitor.